A 170-amino-acid polypeptide reads, in one-letter code: Photosystem I assembly protein Ycf3 (170 aa).

TPR repeat units lie at residues 35-68, 72-105, and 120-153; these read AFTY…EIDP, SYIL…NPFL, and GEQA…TPGN.

The protein belongs to the Ycf3 family.

It is found in the plastid. The protein localises to the chloroplast thylakoid membrane. Functionally, essential for the assembly of the photosystem I (PSI) complex. May act as a chaperone-like factor to guide the assembly of the PSI subunits. The polypeptide is Photosystem I assembly protein Ycf3 (Triticum aestivum (Wheat)).